The chain runs to 126 residues: Aspartate 1-decarboxylase (126 aa).

The Schiff-base intermediate with substrate; via pyruvic acid role is filled by Ser-25. Position 25 is a pyruvic acid (Ser) (Ser-25). A substrate-binding site is contributed by Thr-57. Tyr-58 functions as the Proton donor in the catalytic mechanism. A substrate-binding site is contributed by 73 to 75; the sequence is GGA.

Belongs to the PanD family. Heterooctamer of four alpha and four beta subunits. The cofactor is pyruvate. Is synthesized initially as an inactive proenzyme, which is activated by self-cleavage at a specific serine bond to produce a beta-subunit with a hydroxyl group at its C-terminus and an alpha-subunit with a pyruvoyl group at its N-terminus.

Its subcellular location is the cytoplasm. It carries out the reaction L-aspartate + H(+) = beta-alanine + CO2. It participates in cofactor biosynthesis; (R)-pantothenate biosynthesis; beta-alanine from L-aspartate: step 1/1. In terms of biological role, catalyzes the pyruvoyl-dependent decarboxylation of aspartate to produce beta-alanine. This is Aspartate 1-decarboxylase from Xanthomonas campestris pv. campestris (strain B100).